A 279-amino-acid polypeptide reads, in one-letter code: Tryptophan synthase alpha chain (279 aa).

Active-site proton acceptor residues include Glu50 and Asp61.

The protein belongs to the TrpA family. In terms of assembly, tetramer of two alpha and two beta chains.

The catalysed reaction is (1S,2R)-1-C-(indol-3-yl)glycerol 3-phosphate + L-serine = D-glyceraldehyde 3-phosphate + L-tryptophan + H2O. Its pathway is amino-acid biosynthesis; L-tryptophan biosynthesis; L-tryptophan from chorismate: step 5/5. In terms of biological role, the alpha subunit is responsible for the aldol cleavage of indoleglycerol phosphate to indole and glyceraldehyde 3-phosphate. The protein is Tryptophan synthase alpha chain of Rhizobium rhizogenes (strain K84 / ATCC BAA-868) (Agrobacterium radiobacter).